A 561-amino-acid chain; its full sequence is Potassium-transporting ATPase potassium-binding subunit (561 aa).

The next 11 membrane-spanning stretches (helical) occupy residues isoleucine 5–methionine 25, lysine 63–leucine 83, leucine 103–glycine 122, isoleucine 133–isoleucine 153, leucine 179–phenylalanine 199, isoleucine 255–isoleucine 275, alanine 281–tyrosine 301, alanine 380–valine 400, leucine 418–valine 438, isoleucine 485–valine 505, and alanine 531–leucine 551.

Belongs to the KdpA family. As to quaternary structure, the system is composed of three essential subunits: KdpA, KdpB and KdpC.

The protein localises to the cell membrane. In terms of biological role, part of the high-affinity ATP-driven potassium transport (or Kdp) system, which catalyzes the hydrolysis of ATP coupled with the electrogenic transport of potassium into the cytoplasm. This subunit binds the extracellular potassium ions and delivers the ions to the membrane domain of KdpB through an intramembrane tunnel. The protein is Potassium-transporting ATPase potassium-binding subunit of Caldanaerobacter subterraneus subsp. tengcongensis (strain DSM 15242 / JCM 11007 / NBRC 100824 / MB4) (Thermoanaerobacter tengcongensis).